The chain runs to 222 residues: Charged multivesicular body protein 3 (222 aa).

Residue glycine 2 is the site of N-myristoyl glycine attachment. The segment at 2–113 (GLFGKTQEKP…LQKSTEVMKA (112 aa)) is intramolecular interaction with C-terminus. Residues 22-54 (KIRKEMRVVDRQIRDIQREEEKVKRSVKDAAKK) adopt a coiled-coil conformation. Important for autoinhibitory function stretches follow at residues 59–64 (VCVVLA) and 168–169 (IL). A coiled-coil region spans residues 149-222 (ESMDDQEEME…MQSRLATLRS (74 aa)). The intramolecular interaction with N-terminus stretch occupies residues 151–220 (MDDQEEMEEA…EAMQSRLATL (70 aa)). The interaction with VPS4A stretch occupies residues 151 to 222 (MDDQEEMEEA…MQSRLATLRS (72 aa)). Lysine 179 participates in a covalent cross-link: Glycyl lysine isopeptide (Lys-Gly) (interchain with G-Cter in ubiquitin). Positions 180-222 (APSKVTDALPEPEPSGAMAASDEEEEEEEALEAMQSRLATLRS) are disordered. 3 interaction with STAMBP regions span residues 196–222 (AMAASDEEEEEEEALEAMQSRLATLRS), 203–207 (EEEEE), and 221–222 (RS). The residue at position 200 (serine 200) is a Phosphoserine. Residues 200 to 210 (SDEEEEEEEAL) show a composition bias toward acidic residues. Residues 201–211 (DEEEEEEEALE) carry the MIT-interacting motif motif.

This sequence belongs to the SNF7 family. As to quaternary structure, probable core component of the endosomal sorting required for transport complex III (ESCRT-III). ESCRT-III components are thought to multimerize to form a flat lattice on the perimeter membrane of the endosome. Several assembly forms of ESCRT-III may exist that interact and act sequentially. Forms a metastable monomer in solution; its core structure (without part of the putative autoinhibitory C-terminal acidic region) oligomerizes into a flat lattice via two different dimerization interfaces. In vitro, heteromerizes with CHMP2A (but not CHMP4) to form helical tubular structures that expose membrane-interacting sites on the outside whereas VPS4B can associate on the inside of the tubule. May interact with IGFBP7; the relevance of such interaction however remains unclear. Interacts with CHMP2A. Interacts with CHMP4A; the interaction requires the release of CHMP4A autoinhibition. Interacts with VPS4A. Interacts with STAMBP; the interaction appears to relieve the autoinhibition of CHMP3. Interacts with VTA1.

It is found in the cytoplasm. It localises to the cytosol. The protein localises to the membrane. The protein resides in the endosome. Its subcellular location is the late endosome membrane. Probable core component of the endosomal sorting required for transport complex III (ESCRT-III) which is involved in multivesicular bodies (MVBs) formation and sorting of endosomal cargo proteins into MVBs. MVBs contain intraluminal vesicles (ILVs) that are generated by invagination and scission from the limiting membrane of the endosome and mostly are delivered to lysosomes enabling degradation of membrane proteins, such as stimulated growth factor receptors, lysosomal enzymes and lipids. The MVB pathway appears to require the sequential function of ESCRT-O, -I,-II and -III complexes. ESCRT-III proteins mostly dissociate from the invaginating membrane before the ILV is released. The ESCRT machinery also functions in topologically equivalent membrane fission events, such as the terminal stages of cytokinesis and the budding of enveloped viruses (lentiviruses). ESCRT-III proteins are believed to mediate the necessary vesicle extrusion and/or membrane fission activities, possibly in conjunction with the AAA ATPase VPS4. Selectively binds to phosphatidylinositol 3,5-bisphosphate PtdIns(3,5)P2 and PtdIns(3,4)P2 in preference to other phosphoinositides tested. Involved in late stages of cytokinesis. Plays a role in endosomal sorting/trafficking of EGF receptor. In Macaca fascicularis (Crab-eating macaque), this protein is Charged multivesicular body protein 3 (CHMP3).